The following is a 100-amino-acid chain: Aspartyl/glutamyl-tRNA(Asn/Gln) amidotransferase subunit C (100 aa).

This sequence belongs to the GatC family. Heterotrimer of A, B and C subunits.

It catalyses the reaction L-glutamyl-tRNA(Gln) + L-glutamine + ATP + H2O = L-glutaminyl-tRNA(Gln) + L-glutamate + ADP + phosphate + H(+). The catalysed reaction is L-aspartyl-tRNA(Asn) + L-glutamine + ATP + H2O = L-asparaginyl-tRNA(Asn) + L-glutamate + ADP + phosphate + 2 H(+). Its function is as follows. Allows the formation of correctly charged Asn-tRNA(Asn) or Gln-tRNA(Gln) through the transamidation of misacylated Asp-tRNA(Asn) or Glu-tRNA(Gln) in organisms which lack either or both of asparaginyl-tRNA or glutaminyl-tRNA synthetases. The reaction takes place in the presence of glutamine and ATP through an activated phospho-Asp-tRNA(Asn) or phospho-Glu-tRNA(Gln). In Streptococcus equi subsp. zooepidemicus (strain MGCS10565), this protein is Aspartyl/glutamyl-tRNA(Asn/Gln) amidotransferase subunit C.